Reading from the N-terminus, the 617-residue chain is Protein fem-1 homolog A (617 aa).

ANK repeat units lie at residues D2–A32, E40–L70, E82–N111, T115–V144, H148–R177, K181–R210, and Y213–E242. 2 TPR repeats span residues I245 to G279 and S339 to N372. ANK repeat units lie at residues G482–S524 and D528–A557.

Belongs to the fem-1 family. In terms of assembly, component of a CRL2 E3 ubiquitin-protein ligase complex, also named ECS (Elongin BC-CUL2/5-SOCS-box protein) complex.

The protein resides in the mitochondrion. It is found in the cytoplasm. The protein operates within protein modification; protein ubiquitination. Substrate-recognition component of a Cul2-RING (CRL2) E3 ubiquitin-protein ligase complex of the DesCEND (destruction via C-end degrons) pathway, which recognizes a C-degron located at the extreme C terminus of target proteins, leading to their ubiquitination and degradation. The C-degron recognized by the DesCEND pathway is usually a motif of less than ten residues and can be present in full-length proteins, truncated proteins or proteolytically cleaved forms. The CRL2(FEM1A) complex specifically recognizes proteins with an arginine at the C-terminus: recognizes and binds proteins ending with -Lys/Arg-Xaa-Arg and -Lys/Arg-Xaa-Xaa-Arg C-degrons, leading to their ubiquitination and degradation. This Danio rerio (Zebrafish) protein is Protein fem-1 homolog A.